A 266-amino-acid chain; its full sequence is MTTITRISKDKGEFYLLWLSSGEKLRVSEDILVRQRLLKGQELSDTLIEEIKKASSYDVGLQMAMNYLSYQLRSKKEIFTYLKEKEIVPEDRVKIVQRLEELRLLDDAIFSESYVRTAMRTSDKGPRNVAQQLKQKGISEEDIQHGLTFYTLDEQLNVATATAEKAMKRYRTKSFKDALQKMRLHLMQKGFTNEIIDLALESLAFEKDEEQEQQALDKEGERLWRANQRFDFSKKVQKVKQSLFQKGFDYDLIQQFISEKEVEHDE.

It belongs to the RecX family.

It localises to the cytoplasm. In terms of biological role, modulates RecA activity. This Enterococcus faecalis (strain ATCC 700802 / V583) protein is Regulatory protein RecX.